Here is a 434-residue protein sequence, read N- to C-terminus: APETALA2-like protein 2 (434 aa).

Positions 1 to 116 (MLLDLNVESP…KTRRGPRSRS (116 aa)) are disordered. Residues 12–23 (RSGTSSSSVLNS) show a composition bias toward low complexity. Gly residues predominate over residues 25 to 38 (DAGGGGGGGGGGGL). Positions 72–87 (LPPPPPAAPSPAPAWQ) are enriched in pro residues. Basic residues predominate over residues 104–113 (VAKKTRRGPR). Positions 106 to 115 (KKTRRGPRSR) match the Nuclear localization signal motif. 2 consecutive DNA-binding regions (AP2/ERF) follow at residues 118 to 174 (QYRG…INFN) and 210 to 267 (KFRG…TNFE). The short motif at 291 to 295 (LDLRI) is the EAR element.

This sequence belongs to the AP2/ERF transcription factor family. AP2 subfamily. As to quaternary structure, may form homodimer. Interacts with TPR2/ASP1.

The protein resides in the nucleus. Its function is as follows. Probable transcription factor. Involved in spikelet transition. Together with SNB, controls synergistically inflorescence architecture and floral meristem establishment via the regulation of spatio-temporal expression of B- and E-function floral organ identity genes in the lodicules and of spikelet meristem genes. Prevents lemma and palea elongation as well as grain growth. This Oryza sativa subsp. indica (Rice) protein is APETALA2-like protein 2.